Here is a 471-residue protein sequence, read N- to C-terminus: Ubiquitin-conjugating enzyme E2 variant 3 (471 aa).

A UEV domain is found at 2–145 (EFDCEGLRRL…QEELPMYSLS (144 aa)). An NAD(+)-binding site is contributed by 191–219 (GELGIACTLAISAKGIADRLVLLDLSEGT).

This sequence in the N-terminal section; belongs to the ubiquitin-conjugating enzyme family. UEV subfamily. The protein in the C-terminal section; belongs to the LDH/MDH superfamily. In terms of assembly, homodimer. Colon, colon carcinoma cell lines, normal cervical epithelium, carcinomas of the uterine cervix and peripheral blood leukocytes.

Functionally, possible negative regulator of polyubiquitination. This is Ubiquitin-conjugating enzyme E2 variant 3 from Homo sapiens (Human).